The sequence spans 296 residues: Glycine--tRNA ligase alpha subunit (296 aa).

Belongs to the class-II aminoacyl-tRNA synthetase family. Tetramer of two alpha and two beta subunits.

The protein resides in the cytoplasm. The enzyme catalyses tRNA(Gly) + glycine + ATP = glycyl-tRNA(Gly) + AMP + diphosphate. This chain is Glycine--tRNA ligase alpha subunit, found in Prochlorococcus marinus (strain SARG / CCMP1375 / SS120).